The sequence spans 468 residues: Ribulose bisphosphate carboxylase large chain (468 aa).

Lys4 is subject to N6,N6,N6-trimethyllysine. 2 residues coordinate substrate: Asn113 and Thr163. Lys165 serves as the catalytic Proton acceptor. Substrate is bound at residue Lys167. The Mg(2+) site is built by Lys191, Asp193, and Glu194. Lys191 is modified (N6-carboxylysine). His284 serves as the catalytic Proton acceptor. 3 residues coordinate substrate: Arg285, His317, and Ser369.

It belongs to the RuBisCO large chain family. Type I subfamily. As to quaternary structure, heterohexadecamer of 8 large chains and 8 small chains; disulfide-linked. The disulfide link is formed within the large subunit homodimers. It depends on Mg(2+) as a cofactor. In terms of processing, the disulfide bond which can form in the large chain dimeric partners within the hexadecamer appears to be associated with oxidative stress and protein turnover.

The protein localises to the plastid. It localises to the chloroplast. It catalyses the reaction 2 (2R)-3-phosphoglycerate + 2 H(+) = D-ribulose 1,5-bisphosphate + CO2 + H2O. It carries out the reaction D-ribulose 1,5-bisphosphate + O2 = 2-phosphoglycolate + (2R)-3-phosphoglycerate + 2 H(+). Functionally, ruBisCO catalyzes two reactions: the carboxylation of D-ribulose 1,5-bisphosphate, the primary event in carbon dioxide fixation, as well as the oxidative fragmentation of the pentose substrate in the photorespiration process. Both reactions occur simultaneously and in competition at the same active site. This is Ribulose bisphosphate carboxylase large chain from Pandorea jasminoides (Bower vine).